We begin with the raw amino-acid sequence, 397 residues long: LIM/homeobox protein Lhx3 (397 aa).

LIM zinc-binding domains lie at 31-81 (CAGC…CKDD) and 90-144 (CAAC…CKAD). Thr-63 is modified (phosphothreonine). Ser-71 carries the post-translational modification Phosphoserine. Residues 157-216 (AKRPRTTITAKQLETLKSAYNTSPKPARHVREQLSSETGLDMRVVQVWFQNRRAKEKRLK) constitute a DNA-binding region (homeobox). Residues 212-397 (EKRLKKDAGR…WLDEVDHAQF (186 aa)) are disordered. Phosphotyrosine is present on Tyr-227. Phosphoserine occurs at positions 234 and 238. The segment covering 316-331 (GVPPSPAAPQSLPGPQ) has biased composition (pro residues).

Interacts with POU1F1. At neuronal promoters, interacts with LDB1, in motor neurons LDB1 is displaced by ISL1 and a ternary complex is formed in which ISL1 contacts both LHX3 and LDB1; allosteric structural changes in the DNA binding domain of LHX3, induced by the ISL1-LHX3 interaction, may explain differences in sequence specificity of the different complexes. Interacts with LDB2. May interact with CITED2/MRG1.

It is found in the nucleus. Transcription factor. Recognizes and binds to the consensus sequence motif 5'-AATTAATTA-3' in the regulatory elements of target genes, such as glycoprotein hormones alpha chain CGA and visual system homeobox CHX10, positively modulating transcription; transcription can be co-activated by LDB2. Synergistically enhances transcription from the prolactin promoter in cooperation with POU1F1/Pit-1. Required for the establishment of the specialized cells of the pituitary gland and the nervous system. Involved in the development of interneurons and motor neurons in cooperation with LDB1 and ISL1. The polypeptide is LIM/homeobox protein Lhx3 (LHX3) (Homo sapiens (Human)).